We begin with the raw amino-acid sequence, 458 residues long: Cysteine--tRNA ligase (458 aa).

C28 lines the Zn(2+) pocket. A 'HIGH' region motif is present at residues 30-40 (VTVYDLCHFGH). 3 residues coordinate Zn(2+): C209, H234, and E238. A 'KMSKS' region motif is present at residues 266–270 (KMSKS). Residue K269 coordinates ATP.

Belongs to the class-I aminoacyl-tRNA synthetase family. Monomer. The cofactor is Zn(2+).

Its subcellular location is the cytoplasm. It catalyses the reaction tRNA(Cys) + L-cysteine + ATP = L-cysteinyl-tRNA(Cys) + AMP + diphosphate. The sequence is that of Cysteine--tRNA ligase from Mannheimia succiniciproducens (strain KCTC 0769BP / MBEL55E).